A 494-amino-acid polypeptide reads, in one-letter code: MKKIAIIGRPNVGKSSLFNRLMKKRDAITSDVAGTTRDVKRRHVVIINKEALLLDTGGLDQGCELFDKIKEKSLEAAKKADIILYMVDGKSIPEDADKKLFYELQTLGKEVALVVNKIDNDKLKDNLWDFYEFGTDAIFGISVSHNRSVNALLEWIYDRLPEEDIIKDEDEEDDVNIVEEDDEEFEFDDKEYNEEEEDDNFFYPEDDEDEEFEDDSIFAQNDRIKEFDETDANHIKISIIGRTNVGKSSLLNALLGEERSVVSSVAGTTIDPIDESMEYKDKQLTFVDTAGLRRRGKIVGIEKFALMRTKEMLENSNMALVVLDASEPFLDLDEKIAGLVDSNRLACIIVLNKWDIANRDEYDKIIQEVRDRFKFLAYAPIVTLSAKSHRRVDKLFDMILEIDKNYSQHIKTSELNVVLEKALRRHQLPSMRGQIIRIYYATQYETRPPKIAIVMNKPRGLHFTYRRYLTNKLREAFSFSGTPVLFKAKKRGEK.

2 consecutive EngA-type G domains span residues 2–164 and 235–407; these read KKIA…PEED and IKIS…KNYS. Residues 8 to 15, 55 to 59, 116 to 119, 241 to 248, 288 to 292, and 352 to 355 contribute to the GTP site; these read GRPNVGKS, DTGGL, NKID, GRTNVGKS, DTAGL, and NKWD. The KH-like domain occupies 408-492; it reads QHIKTSELNV…PVLFKAKKRG (85 aa).

Belongs to the TRAFAC class TrmE-Era-EngA-EngB-Septin-like GTPase superfamily. EngA (Der) GTPase family. As to quaternary structure, associates with the 50S ribosomal subunit.

GTPase that plays an essential role in the late steps of ribosome biogenesis. The polypeptide is GTPase Der (Sulfurimonas denitrificans (strain ATCC 33889 / DSM 1251) (Thiomicrospira denitrificans (strain ATCC 33889 / DSM 1251))).